Here is a 266-residue protein sequence, read N- to C-terminus: rRNA adenine N-6-methyltransferase (266 aa).

S-adenosyl-L-methionine contacts are provided by His-14, Thr-16, Gly-41, Glu-62, Asp-87, and Asn-103.

The protein belongs to the class I-like SAM-binding methyltransferase superfamily. rRNA adenine N(6)-methyltransferase family.

Involved in erythromycin resistance. This Bacteroides fragilis protein is rRNA adenine N-6-methyltransferase (ermF).